The primary structure comprises 309 residues: MEEILKTLPQHTCSWLKHKIIMYKYQDFWTSKQLLEGTLMAQQSFKAEPSDVFLCSAPKTGTTWLKALAFAIVTRENFDESTSPLLKKLVHECVPFLERQVEEIEHNRESSSLPLVATHLPYASLPESVIASNCRMVYIYRNIKDVIVSNYHFLREAFKLSMEDAPFEETFEDFYNGNSSYGPYWDHILGYRKASLDMPDKILFLKYEDLKSEPISNVKRLAEFIGYPFSNDEEKAGVIENIINMCSFENLSSLEVNKTRKPKGGMLENRLYYRKGQDGDWKNYFTNEMKEKIDKIMDEKLSGTGLILK.

59-64 (KTGTTW) is a binding site for 3'-phosphoadenylyl sulfate. The active-site Proton acceptor is His119. Residues Arg141, Ser149, Tyr207, and 274-276 (RKG) each bind 3'-phosphoadenylyl sulfate.

Belongs to the sulfotransferase 1 family.

It is found in the cytoplasm. The protein is Flavonol sulfotransferase-like of Flaveria bidentis (Coastal plain yellowtops).